A 414-amino-acid chain; its full sequence is Tryptophan synthase beta chain (414 aa).

Lysine 105 is subject to N6-(pyridoxal phosphate)lysine.

The protein belongs to the TrpB family. Tetramer of two alpha and two beta chains. It depends on pyridoxal 5'-phosphate as a cofactor.

The enzyme catalyses (1S,2R)-1-C-(indol-3-yl)glycerol 3-phosphate + L-serine = D-glyceraldehyde 3-phosphate + L-tryptophan + H2O. Its pathway is amino-acid biosynthesis; L-tryptophan biosynthesis; L-tryptophan from chorismate: step 5/5. Functionally, the beta subunit is responsible for the synthesis of L-tryptophan from indole and L-serine. The protein is Tryptophan synthase beta chain of Gloeobacter violaceus (strain ATCC 29082 / PCC 7421).